The following is an 894-amino-acid chain: Desmocollin-1 (894 aa).

Residues 1 to 29 form the signal peptide; that stretch reads MALASAAPGSIFCKQLLFSLLVLTLLCDA. Residues 30–134 constitute a propeptide that is removed on maturation; that stretch reads CQKVYLRVPS…KDTALKRSKR (105 aa). 5 consecutive Cadherin domains span residues 135 to 242, 243 to 354, 355 to 471, 472 to 575, and 576 to 682; these read RWAP…APYF, EHRV…PPSF, TETS…GPEC, HPPV…DHAP, and QIDK…STRD. Residues 135 to 691 lie on the Extracellular side of the membrane; the sequence is RWAPIPASLM…DVRPNVILGR (557 aa). A glycan (N-linked (GlcNAc...) asparagine) is linked at Asn-165. Position 385 is a phosphothreonine (Thr-385). Asn-546 carries N-linked (GlcNAc...) asparagine glycosylation. A helical membrane pass occupies residues 692–714; sequence WAILAMVLGSVLLLCILFTCFCV. Topologically, residues 715–894 are cytoplasmic; that stretch reads TAKRTVKKCF…RTLAKTCIKK (180 aa).

As to quaternary structure, binds to JUP/plakoglobin. As to expression, strongly expressed in epidermis, less in lymph node and tongue.

Its subcellular location is the cell membrane. The protein localises to the cell junction. The protein resides in the desmosome. Its function is as follows. A component of desmosome cell-cell junctions which are required for positive regulation of cellular adhesion. Required for desmosome adhesion strength between the granular layers of the epidermis, as a result moderates epidermal proliferation and differentiation. Is therefore required to maintain postnatal epidermal barrier function and normal hair follicle morphology into adulthood. This is Desmocollin-1 (DSC1) from Homo sapiens (Human).